The sequence spans 305 residues: Cysteine synthase (305 aa).

Lysine 45 is subject to N6-(pyridoxal phosphate)lysine. Residues asparagine 75, 179–183 (GSGGT), and serine 266 contribute to the pyridoxal 5'-phosphate site.

Belongs to the cysteine synthase/cystathionine beta-synthase family. Homodimer. The cofactor is pyridoxal 5'-phosphate.

The enzyme catalyses O-acetyl-L-serine + hydrogen sulfide = L-cysteine + acetate. It participates in amino-acid biosynthesis; L-cysteine biosynthesis; L-cysteine from L-serine: step 2/2. This is Cysteine synthase (cysM) from Helicobacter pylori (strain J99 / ATCC 700824) (Campylobacter pylori J99).